The following is a 77-amino-acid chain: U8-lycotoxin-Ls1u (77 aa).

A signal peptide spans 1–20; that stretch reads MKLIIFTGLVLFAIVSLIEA. Residues 21–26 constitute a propeptide that is removed on maturation; it reads QAENEK.

The protein belongs to the neurotoxin 19 (CSTX) family. 08 (U8-Lctx) subfamily. Contains 4 disulfide bonds. As to expression, expressed by the venom gland.

It localises to the secreted. This Lycosa singoriensis (Wolf spider) protein is U8-lycotoxin-Ls1u.